The chain runs to 364 residues: Chorismate synthase (364 aa).

NADP(+) is bound at residue Arg-48. Residues 125-127, 237-238, Gly-277, 292-296, and Arg-318 each bind FMN; these read RSS, NA, and KPTSS.

It belongs to the chorismate synthase family. Homotetramer. It depends on FMNH2 as a cofactor.

It carries out the reaction 5-O-(1-carboxyvinyl)-3-phosphoshikimate = chorismate + phosphate. The protein operates within metabolic intermediate biosynthesis; chorismate biosynthesis; chorismate from D-erythrose 4-phosphate and phosphoenolpyruvate: step 7/7. Functionally, catalyzes the anti-1,4-elimination of the C-3 phosphate and the C-6 proR hydrogen from 5-enolpyruvylshikimate-3-phosphate (EPSP) to yield chorismate, which is the branch point compound that serves as the starting substrate for the three terminal pathways of aromatic amino acid biosynthesis. This reaction introduces a second double bond into the aromatic ring system. This chain is Chorismate synthase, found in Albidiferax ferrireducens (strain ATCC BAA-621 / DSM 15236 / T118) (Rhodoferax ferrireducens).